A 200-amino-acid polypeptide reads, in one-letter code: Recombination protein RecR (200 aa).

The segment at 57 to 72 (CRQCRTLTEQELCPQC) adopts a C4-type zinc-finger fold. The Toprim domain occupies 80–175 (TQLCVVEGPT…AATRIAHGVP (96 aa)).

This sequence belongs to the RecR family.

Its function is as follows. May play a role in DNA repair. It seems to be involved in an RecBC-independent recombinational process of DNA repair. It may act with RecF and RecO. The polypeptide is Recombination protein RecR (Pseudomonas putida (strain GB-1)).